The following is a 908-amino-acid chain: Low affinity vacuolar monovalent cation/H(+) antiporter (908 aa).

Polar residues predominate over residues 1–15 (MAKNNHISASGNSTS). Positions 1-20 (MAKNNHISASGNSTSGDHRL) are disordered. At 1–244 (MAKNNHISAS…WEVTCSNVLW (244 aa)) the chain is on the cytoplasmic side. Thr-26 is subject to Phosphothreonine. Phosphoserine is present on Ser-32. A Phosphothreonine modification is found at Thr-33. Residues 68–147 (NKSKRSVSSQ…DDEDANDDSR (80 aa)) form a disordered region. A compositionally biased stretch (low complexity) spans 73 to 87 (SVSSQSPIVHSSNNT). The segment covering 102 to 121 (ESLSSKSHSVPDLNTATPSS) has biased composition (polar residues). Phosphoserine is present on Ser-110. Residue Thr-118 is modified to Phosphothreonine. Ser-121 bears the Phosphoserine mark. A helical membrane pass occupies residues 245–265 (FILFGFPIAILFYSAAIVVFL). The Vacuolar segment spans residues 266–408 (LGGGGLVTNS…GRVLFYTIFH (143 aa)). The N-linked (GlcNAc...) asparagine glycan is linked to Asn-361. A helical membrane pass occupies residues 409-429 (LVLQPILAVLSLCLWLLVFTI). Over 430–494 (PMSNVLWQIM…HYYKYTVDGT (65 aa)) the chain is Cytoplasmic. The chain crosses the membrane as a helical span at residues 495-515 (NVIVVNLISIVFFTIFDFYVL). Over 516-530 (KNFLHWKTWFTYESS) the chain is Vacuolar. The chain crosses the membrane as a helical span at residues 531-551 (IFILCLTSTIPLAFYIGQAVA). The Cytoplasmic segment spans residues 552–560 (SISAQTSMG). A helical transmembrane segment spans residues 561–581 (VGAVINAFFSTIVEIFLYCVA). The Vacuolar portion of the chain corresponds to 582–587 (LQQKKG). Residues 588 to 608 (LLVEGSMIGSILGAVLLLPGL) form a helical membrane-spanning segment. Topologically, residues 609-626 (SMCGGALNRKTQRYNPAS) are cytoplasmic. A helical transmembrane segment spans residues 627 to 647 (AGVSSALLIFSMIVMFVPTVL). Residues 648–686 (YEIYGGYSVNCADGANDRDCTFSHPPLKFNRLFTHVIQP) are Vacuolar-facing. Residues 687–707 (MSISCAIVLFCAYIIGLWFTL) traverse the membrane as a helical segment. Topologically, residues 708–746 (RTHAKMIWQLPIADPTSTAPEQQEQNSHDAPNWSRSKST) are cytoplasmic. A helical membrane pass occupies residues 747–767 (CILLMSTLLYAIIAEILVSCV). Residues 768-783 (DAVLEDIPSLNPKFLG) lie on the Vacuolar side of the membrane. The helical transmembrane segment at 784 to 804 (LTIFALIPNTTEFLNAISFAI) threads the bilayer. At 805–816 (HGNVALSMEIGS) the chain is on the cytoplasmic side. Residues 817 to 837 (AYALQVCLLQIPSLVIYSIFY) form a helical membrane-spanning segment. Topologically, residues 838-851 (TWNVKKSMINIRTQ) are vacuolar. Residues 852-872 (MFPLVFPRWDIFGAMTSVFMF) form a helical membrane-spanning segment. Topologically, residues 873 to 885 (TYLYAEGKSNYFK) are cytoplasmic. The helical transmembrane segment at 886 to 906 (GSMLILLYIIIVVGFYFQGAL) threads the bilayer. Residues 907–908 (SE) are Vacuolar-facing.

The protein belongs to the Ca(2+):cation antiporter (CaCA) (TC 2.A.19) family.

Its subcellular location is the vacuole membrane. Functionally, has a role in promoting intracellular monovalent cation sequestration via the exchange of monovalent cations and especially Na(+) for hydrogen ions across the vacuolar membrane. The polypeptide is Low affinity vacuolar monovalent cation/H(+) antiporter (VNX1) (Saccharomyces cerevisiae (strain ATCC 204508 / S288c) (Baker's yeast)).